The chain runs to 1250 residues: MEEVITIAQIVHRGTDILSLNNEEIEALVDEIYSTLKGSNDIKNIRLIDFLFSLKDFVNHVRAEQSKLPDLSMPMEAYIRQLLVNPDVVPIVSEKKKELRVRPSTRKEIFLINGTHLAVPAEVPIEIYGLKLRLKTFSPQCFMRMAEIGSFSPETLGYVASGANLTNFIRVFMKCVDQETWKKNGEGVVVTTKENIIQFTHQYIELYKFLRSGGHSWLINRLAEEMVHRKLDRENQGSHISSIIETEEVEPEEENIKRVIFFLKELSTMYSVFPVFTSGYMPLLYDLYRAGYLEVLWNPVEQKFLQHAEQREKEQMILQQVDMKLTEVTTQARQYFKIMEEKIGRVQSDTIREILTMEGKVDDPSSILQEVIKACGKQEAELITTEYLNIKKQWELQEKNACAHLKLVKQLRSGLQYAESLKVLESIRVLYKEKNNTTNWNLCKACGFKLLCPHVDMLIQLQAAEASYDTMRTKLMKFSGINKEKENNQGLIYSYFCKICGEELAHFIQEDRTADVGVIGDLNSKLRIFIWQETMKACTFIHFGKLVDVKQFANIAVNVCLPLIYSIENIKKEEDYDPLTQLYAVIYIYAYILNLIYSSQKNKEFLTITIHGMKADSSLNAYVTFLLEKMTQQYSGIINQLSEITDQWIANNFREAFKKIIHQNGLQGLSVQDDTKVLLTEILLDPLYDYAATVARIDGSIPMHKPRTPKEAEYEFKTVIGRTPAELLSQKEFYDKIYTSKYRPDFTQLARLNDVYFQEESLRVWWGGRDEEKISTLIYLRAYELFLKYLQNAPNFNSELAEFKKYENAYGEQKALLAQQGFYNIFDPNTGKADQRTRLFEYKKLPISTLYDEKGLPHKWTIYVYKAIDSSQKPAEIEVSRKDVIKKIDNHYALADLRCSVCHVLQHEVGQLNIKKVQTALKASLEFNTFYAFYESRCPKGGLHDFQDKKCIKCGLFTYIIYDHLSQPELVHDYYNNYKDQYEKEKMSIHSIQIKKDIAVPPTETQPKPQQKPWTFDYGKIIKTAKILDISPAVVEAIGAMEGRSYADIKEGQGAPPPPTSMDDPRLMAVDSAVRIFLYNYNCLRHISTFNKPPMHIERLVKHLSYEEKEDLEKVLPNVVNEYHTTFKQLRVTDPASALLYSIEFLCISFLTLYEIKEPSWVVNIVREFALTELNTIIQSEKLLSKPGAFNFMIFGEDFVCSGEDSSMDDISAYSSPGLFGEDIIDRLDDPFSIEDVDISLDVLDNLAPQ.

This sequence belongs to the asfivirus M1249L family. Interacts with the minor capsid protein p17 and with the hexon capsid protein p72 capsomers; these interactions form a rigid zipper structure that stabilizes the capsomers. Interacts with host IRF3.

It localises to the virion. The protein localises to the host cytoplasm. In terms of biological role, together with the penton and the other minor capsid proteins (p17, p49), forms a complicated network immediately below the outer capsid shell, stabilizing the whole capsid. In addition, blocks IFN-beta transactivation mediated by the cGAS-STING pathway and regulates the transcriptional activity of IFN-beta. Mechanistically, suppresses the phosphorylation of host key adapter protein TBK1 and degrades host IRF3 in the cytoplasm. The protein is Minor capsid protein M1249L of Ornithodoros (relapsing fever ticks).